Consider the following 217-residue polypeptide: Proteasome subunit beta type-9 (217 aa).

Positions 1-18 (MLEESSEPGWLSEEVKTG) are cleaved as a propeptide — removed in mature form. The Nucleophile role is filled by T19.

This sequence belongs to the peptidase T1B family. In terms of assembly, the 26S proteasome consists of a 20S proteasome core and two 19S regulatory subunits. The 20S proteasome core is composed of 28 subunits that are arranged in four stacked rings, resulting in a barrel-shaped structure. The two end rings are each formed by seven alpha subunits, and the two central rings are each formed by seven beta subunits. The catalytic chamber with the active sites is on the inside of the barrel. Component of the immunoproteasome, where it displaces the equivalent housekeeping subunit PSMB6. In terms of processing, autocleaved. The resulting N-terminal Thr residue of the mature subunit is responsible for the nucleophile proteolytic activity.

It localises to the cytoplasm. It is found in the nucleus. The catalysed reaction is Cleavage of peptide bonds with very broad specificity.. In terms of biological role, the proteasome is a multicatalytic proteinase complex which is characterized by its ability to cleave peptides with Arg, Phe, Tyr, Leu, and Glu adjacent to the leaving group at neutral or slightly basic pH. The proteasome has an ATP-dependent proteolytic activity. This subunit is involved in antigen processing to generate class I binding peptides. The chain is Proteasome subunit beta type-9 (psmb9-a) from Salmo salar (Atlantic salmon).